We begin with the raw amino-acid sequence, 138 residues long: Prefoldin subunit alpha (138 aa).

It belongs to the prefoldin subunit alpha family. Heterohexamer of two alpha and four beta subunits.

It localises to the cytoplasm. Functionally, molecular chaperone capable of stabilizing a range of proteins. Seems to fulfill an ATP-independent, HSP70-like function in archaeal de novo protein folding. This is Prefoldin subunit alpha from Methanosphaera stadtmanae (strain ATCC 43021 / DSM 3091 / JCM 11832 / MCB-3).